The sequence spans 465 residues: Pleckstrin homology domain-containing family S member 1 (465 aa).

The 116-residue stretch at 14–129 (EVCKQDYFIK…WVSFMSSFRQ (116 aa)) folds into the PH domain. Residues 159–173 (PSSTSEAVGSSSPRN) show a composition bias toward polar residues. Disordered regions lie at residues 159-179 (PSST…QDKH) and 258-283 (ETSH…GDLH). Residues 258-271 (ETSHESVDSSKEEP) are compositionally biased toward basic and acidic residues.

The chain is Pleckstrin homology domain-containing family S member 1 from Homo sapiens (Human).